A 465-amino-acid chain; its full sequence is Gamma-aminobutyric acid receptor subunit rho-2 (465 aa).

A signal peptide spans 1–20; the sequence is MPYFTRLILFLFCLMVLVES. Over 21–260 the chain is Extracellular; that stretch reads RKPKRKRWTG…LYINFTLRRH (240 aa). Arg-105 contributes to the 4-aminobutanoate binding site. N-linked (GlcNAc...) asparagine glycosylation is present at Asn-120. 4-aminobutanoate is bound at residue Ser-169. Cys-178 and Cys-192 are disulfide-bonded. Glu-197 serves as a coordination point for 4-aminobutanoate. N-linked (GlcNAc...) asparagine glycosylation is present at Asn-254. A helical membrane pass occupies residues 261–281; it reads IFFFLLQTYFPATLMVMLSWV. Residues 282–293 lie on the Cytoplasmic side of the membrane; the sequence is SFWIDRRAVPAR. Residues 294–314 form a helical membrane-spanning segment; that stretch reads VSLGITTVLTMTTIITGVNAS. The Extracellular portion of the chain corresponds to 315-325; sequence MPRVSYVKAVD. The chain crosses the membrane as a helical span at residues 326–346; it reads IYLWVSFVFVFLSVLEYAAVN. The Cytoplasmic portion of the chain corresponds to 347 to 443; it reads YLTTVQERKE…IFQNTHAIDK (97 aa). A helical transmembrane segment spans residues 444 to 464; sequence YSRLIFPASYIFFNLIYWSVF. Residue Ser-465 is a topological domain, extracellular.

This sequence belongs to the ligand-gated ion channel (TC 1.A.9) family. Gamma-aminobutyric acid receptor (TC 1.A.9.5) subfamily. GABRR2 sub-subfamily. In terms of assembly, three rho subunits (rho-1/GBRR1, rho-2/GBRR2 and rho-3/GBRR3) coassemble either to form functional homopentamers or heteropentamers. Rho-2 is unable to form a functional homopentamer. Interacts with SQSTM1.

The protein resides in the postsynaptic cell membrane. It is found in the cell membrane. The enzyme catalyses chloride(in) = chloride(out). Rho subunit of the pentameric ligand-gated chloride channels responsible for mediating the effects of gamma-aminobutyric acid (GABA), the major inhibitory neurotransmitter in the brain. Rho-containing GABA-gated chloride channels are a subclass of GABA(A) receptors (GABAARs) entirely composed of rho subunits, where GABA molecules bind at the rho intersubunit interfaces. When activated by GABA, rho-GABAARs selectively allow the flow of chloride anions across the cell membrane down their electrochemical gradient. Rho-2 GABAARs may contribute to the regulation of glial development in the cerebellum by controlling extrasynaptic transmission. Rho-2 GABAARs are also involved in neuronal tonic (extrasynaptic) and phasic (synaptic) transmission in the Purkinje neurons of the cerebellum. Rho-2 GABAARs expressed in retina may play a role in retinal neurotransmission. This chain is Gamma-aminobutyric acid receptor subunit rho-2, found in Homo sapiens (Human).